Here is a 181-residue protein sequence, read N- to C-terminus: MAVLFRDQTKSALEALLFVASEPLTVQALARIVEIDVADALELLLELAKEYQDRPGGLKIVQVSDTWQICTRPECAPYIERLYRKSGTGLSKAAIETLAIIAYRQPITRSEVEMIRGVKVDSPINTLLERNLIEEKGRREGPGRPVLYGTTLEFLKHFGLKDVSELPPLEEFLVEGETIDI.

Belongs to the ScpB family. In terms of assembly, homodimer. Homodimerization may be required to stabilize the binding of ScpA to the Smc head domains. Component of a cohesin-like complex composed of ScpA, ScpB and the Smc homodimer, in which ScpA and ScpB bind to the head domain of Smc. The presence of the three proteins is required for the association of the complex with DNA.

The protein resides in the cytoplasm. Functionally, participates in chromosomal partition during cell division. May act via the formation of a condensin-like complex containing Smc and ScpA that pull DNA away from mid-cell into both cell halves. The polypeptide is Segregation and condensation protein B (Desulforamulus reducens (strain ATCC BAA-1160 / DSM 100696 / MI-1) (Desulfotomaculum reducens)).